A 330-amino-acid chain; its full sequence is MHHQSVLHSGYFHPLLRSWQTAASTVSASNLIYPIFVTDVPDDVQPIASLPGVARYGVNQLEEMLRPLVEAGLRCVLIFGVPSRVPKDEQGSAADSEDSPTIEAVRLLRKTFPSLLVACDVCLCPYTSHGHCGLLSENGAFLAEESRQRLAEVALAYAKAGCQVVAPSDMMDGRVEAIKAALLKHGLGNRVSVMSYSAKFASCFYGPFRDAAQSSPAFGDRRCYQLPPGARGLALRAVARDIQEGADMLMVKPGLPYLDMVREVKDKHPELPLAVYQVSGEFAMLWHGAQAGAFDLRTAVLETMTAFRRAGADIIITYFAPQLLKWLKEE.

Residues C122, C124, H131, and C132 each contribute to the Zn(2+) site. K199 serves as the catalytic Schiff-base intermediate with substrate. K199 is modified (N6-succinyllysine). R209 lines the 5-aminolevulinate pocket. Position 215 is a phosphoserine (S215). 5-aminolevulinate is bound at residue R221. C223 is a Zn(2+) binding site. Catalysis depends on K252, which acts as the Schiff-base intermediate with substrate. K252 carries the post-translational modification N6-succinyllysine. Positions 279 and 318 each coordinate 5-aminolevulinate.

Belongs to the ALAD family. Homooctamer; active form. Homohexamer; low activity form. Zn(2+) serves as cofactor.

The protein localises to the cytoplasm. It localises to the cytosol. The enzyme catalyses 2 5-aminolevulinate = porphobilinogen + 2 H2O + H(+). The protein operates within porphyrin-containing compound metabolism; protoporphyrin-IX biosynthesis; coproporphyrinogen-III from 5-aminolevulinate: step 1/4. Its activity is regulated as follows. Can alternate between a fully active homooctamer and a low-activity homohexamer. A bound magnesium ion may promote the assembly of the fully active homooctamer. The magnesium-binding site is absent in the low-activity homohexamer. Inhibited by compounds that favor the hexameric state. Inhibited by divalent lead ions. The lead ions partially displace the zinc cofactor. Functionally, catalyzes an early step in the biosynthesis of tetrapyrroles. Binds two molecules of 5-aminolevulinate per subunit, each at a distinct site, and catalyzes their condensation to form porphobilinogen. In Mus musculus (Mouse), this protein is Delta-aminolevulinic acid dehydratase (Alad).